Here is a 1192-residue protein sequence, read N- to C-terminus: Protein pangolin, isoform J (1192 aa).

The Nuclear localization signal motif lies at 351 to 357 (LGLPSEE). Residues 691–713 (AKHTSNAQSNESKETTNDKKKPH) are disordered. A DNA-binding region (HMG box) is located at residues 714 to 782 (IKKPLNAFML…LHMELYPGWS (69 aa)). Disordered regions lie at residues 790 to 812 (VSKK…NMKK), 847 to 916 (PAED…SPST), 955 to 986 (QRPT…VSPV), and 1136 to 1192 (QLNN…ISVS). Residues 862-871 (SDDDEDDYDD) show a composition bias toward acidic residues. Composition is skewed to low complexity over residues 898–915 (SMPS…QSPS) and 957–986 (PTLV…VSPV). Polar residues-rich tracts occupy residues 1140-1162 (RTEN…VNSS) and 1170-1192 (SQAI…ISVS).

It belongs to the TCF/LEF family. As to quaternary structure, binds to the beta-catenin homolog arm or to gro.

The protein resides in the nucleus. Functionally, segment polarity protein. Functions together with arm to transduce the Wingless (Wg) signal in embryos and in developing adult tissues. Acts as a transcriptional activator, but in the absence of arm, it binds to gro and acts as a transcriptional repressor of wg-responsive genes. The chain is Protein pangolin, isoform J from Drosophila melanogaster (Fruit fly).